Reading from the N-terminus, the 361-residue chain is Large ribosomal subunit protein mL45 (361 aa).

The interval 319–361 is disordered; the sequence is EPPKELSAGDAEVKQVDSVGEQSKEQLPLATPVESHTKPSLAI.

Belongs to the mitochondrion-specific ribosomal protein mL45 family.

The protein localises to the mitochondrion. This is Large ribosomal subunit protein mL45 (mRpL45) from Drosophila melanogaster (Fruit fly).